The chain runs to 69 residues: DNA gyrase inhibitor YacG (69 aa).

4 residues coordinate Zn(2+): C9, C12, C28, and C32. A disordered region spans residues 48–69 (PVSPDAEDELFSGDLEAPHRGH).

It belongs to the DNA gyrase inhibitor YacG family. As to quaternary structure, interacts with GyrB. Requires Zn(2+) as cofactor.

Inhibits all the catalytic activities of DNA gyrase by preventing its interaction with DNA. Acts by binding directly to the C-terminal domain of GyrB, which probably disrupts DNA binding by the gyrase. The protein is DNA gyrase inhibitor YacG of Pseudomonas syringae pv. syringae (strain B728a).